The sequence spans 382 residues: 2-carboxy-1,4-naphthoquinone phytyltransferase, chloroplastic (382 aa).

A chloroplast-targeting transit peptide spans 1 to 66; sequence MVNFVSLCDI…RRNLRVRPIF (66 aa). 8 consecutive transmembrane segments (helical) span residues 99–119, 123–143, 168–188, 196–216, 224–244, 257–277, 323–343, and 361–381; these read VALV…GLFL, YVTL…SNDV, TLAA…WTSL, ILLL…PFRL, PLCF…LLGS, VLSS…CSHF, ILPL…NLVS, and YYCV…LVIA.

The protein belongs to the MenA family. Type 2 subfamily.

It localises to the plastid. It is found in the chloroplast membrane. The enzyme catalyses 2-carboxy-1,4-naphthoquinone + phytyl diphosphate + H(+) = demethylphylloquinone + CO2 + diphosphate. Its function is as follows. Involved in the synthesis of phylloquinone (vitamin K1). Catalyzes the transfer of a prenyl chain to 2-carboxy-1,4-naphthoquinone. The protein is 2-carboxy-1,4-naphthoquinone phytyltransferase, chloroplastic (ABC4) of Arabidopsis thaliana (Mouse-ear cress).